Here is a 158-residue protein sequence, read N- to C-terminus: Small ribosomal subunit protein uS9 (158 aa).

The segment at 1-20 (MTEAVETETVEPTTDEATAA) is disordered. Residues 10–20 (VEPTTDEATAA) are compositionally biased toward low complexity.

The protein belongs to the universal ribosomal protein uS9 family.

This is Small ribosomal subunit protein uS9 from Mycobacterium sp. (strain JLS).